A 230-amino-acid polypeptide reads, in one-letter code: Large ribosomal subunit protein uL4 (230 aa).

Residues 51 to 105 are disordered; it reads RAAARQGTHSTKTRGDVSGGGRKPYRQKGTGRARQGSMRAPQFTGGGIVHGPKLR.

The protein belongs to the universal ribosomal protein uL4 family. Part of the 50S ribosomal subunit.

In terms of biological role, one of the primary rRNA binding proteins, this protein initially binds near the 5'-end of the 23S rRNA. It is important during the early stages of 50S assembly. It makes multiple contacts with different domains of the 23S rRNA in the assembled 50S subunit and ribosome. Its function is as follows. Forms part of the polypeptide exit tunnel. In Mycobacterium leprae (strain Br4923), this protein is Large ribosomal subunit protein uL4.